The following is a 555-amino-acid chain: Probable terpene synthase 6 (555 aa).

Residues D309, D313, and E460 each coordinate Mg(2+). A DDXXD motif motif is present at residues 309 to 313; the sequence is DDTYD.

The protein belongs to the terpene synthase family. The cofactor is Mg(2+).

In terms of biological role, probable sesquiterpene synthase. The polypeptide is Probable terpene synthase 6 (TPS6) (Ricinus communis (Castor bean)).